We begin with the raw amino-acid sequence, 388 residues long: Succinate--CoA ligase [ADP-forming] subunit beta (388 aa).

The ATP-grasp domain maps to 9–244; the sequence is KQLFARYGLP…PSQEDSREAH (236 aa). Residues K46, 53–55, E99, T102, and E107 each bind ATP; that span reads GRG. Residues N199 and D213 each contribute to the Mg(2+) site. Substrate-binding positions include N264 and 321–323; that span reads GIV.

Belongs to the succinate/malate CoA ligase beta subunit family. In terms of assembly, heterotetramer of two alpha and two beta subunits. The cofactor is Mg(2+).

The enzyme catalyses succinate + ATP + CoA = succinyl-CoA + ADP + phosphate. It carries out the reaction GTP + succinate + CoA = succinyl-CoA + GDP + phosphate. The protein operates within carbohydrate metabolism; tricarboxylic acid cycle; succinate from succinyl-CoA (ligase route): step 1/1. In terms of biological role, succinyl-CoA synthetase functions in the citric acid cycle (TCA), coupling the hydrolysis of succinyl-CoA to the synthesis of either ATP or GTP and thus represents the only step of substrate-level phosphorylation in the TCA. The beta subunit provides nucleotide specificity of the enzyme and binds the substrate succinate, while the binding sites for coenzyme A and phosphate are found in the alpha subunit. The sequence is that of Succinate--CoA ligase [ADP-forming] subunit beta from Erwinia tasmaniensis (strain DSM 17950 / CFBP 7177 / CIP 109463 / NCPPB 4357 / Et1/99).